The following is a 360-amino-acid chain: Uptake hydrogenase small subunit (360 aa).

The tat-type signal signal peptide spans 1 to 46; the sequence is MATAETFYDVIRRQGITRRSFTKFCSLTAASLGFGPGAATAMAEAL. Positions 62, 65, 160, 194, 232, 235, 260, and 266 each coordinate [4Fe-4S] cluster. Residues C275, C294, and C297 each coordinate [3Fe-4S] cluster.

Belongs to the [NiFe]/[NiFeSe] hydrogenase small subunit family. As to quaternary structure, heterodimer of a large and a small subunit. It depends on [4Fe-4S] cluster as a cofactor. [3Fe-4S] cluster serves as cofactor. Predicted to be exported by the Tat system. The position of the signal peptide cleavage has not been experimentally proven.

Its subcellular location is the cell membrane. It catalyses the reaction H2 + A = AH2. Functionally, this enzyme recycles the H(2) produced by nitrogenase to increase the production of ATP and to protect nitrogenase against inhibition or damage by O(2) under carbon- or phosphate-limited conditions. This chain is Uptake hydrogenase small subunit (hupA), found in Rhizobium leguminosarum bv. viciae.